The sequence spans 448 residues: Chromosomal replication initiator protein DnaA (448 aa).

Residues 1–73 (MSTHLTETWE…VNALKLLTSK (73 aa)) form a domain I, interacts with DnaA modulators region. A domain II region spans residues 73-109 (KKYNIDFIVTTEEKIEENEKNHNNEKSNIVVNDEMST). Residues 110-326 (MLNPKYTFDS…GALIRIVAFS (217 aa)) form a domain III, AAA+ region region. ATP is bound by residues Gly154, Gly156, Lys157, and Thr158. Residues 327–448 (SLTNKEISVD…NELNKRINQK (122 aa)) are domain IV, binds dsDNA.

This sequence belongs to the DnaA family. In terms of assembly, oligomerizes as a right-handed, spiral filament on DNA at oriC.

It is found in the cytoplasm. In terms of biological role, plays an essential role in the initiation and regulation of chromosomal replication. ATP-DnaA binds to the origin of replication (oriC) to initiate formation of the DNA replication initiation complex once per cell cycle. Binds the DnaA box (a 9 base pair repeat at the origin) and separates the double-stranded (ds)DNA. Forms a right-handed helical filament on oriC DNA; dsDNA binds to the exterior of the filament while single-stranded (ss)DNA is stabiized in the filament's interior. The ATP-DnaA-oriC complex binds and stabilizes one strand of the AT-rich DNA unwinding element (DUE), permitting loading of DNA polymerase. After initiation quickly degrades to an ADP-DnaA complex that is not apt for DNA replication. Binds acidic phospholipids. The sequence is that of Chromosomal replication initiator protein DnaA from Clostridium botulinum (strain 657 / Type Ba4).